A 409-amino-acid chain; its full sequence is Elongation factor Tu (409 aa).

In terms of domain architecture, tr-type G spans 10–214; sequence KPHVNIGTIG…AVDSYIPDPE (205 aa). Residues 19-26 are G1; the sequence is GHVDHGKT. GTP is bound at residue 19 to 26; it reads GHVDHGKT. T26 lines the Mg(2+) pocket. Positions 60–64 are G2; that stretch reads GITIN. Positions 81-84 are G3; it reads DCPG. Residues 81–85 and 136–139 contribute to the GTP site; these read DCPGH and NKED. Residues 136 to 139 form a G4 region; that stretch reads NKED. The interval 174 to 176 is G5; it reads SGL.

This sequence belongs to the TRAFAC class translation factor GTPase superfamily. Classic translation factor GTPase family. EF-Tu/EF-1A subfamily. In terms of assembly, monomer.

The protein localises to the cytoplasm. The catalysed reaction is GTP + H2O = GDP + phosphate + H(+). GTP hydrolase that promotes the GTP-dependent binding of aminoacyl-tRNA to the A-site of ribosomes during protein biosynthesis. In Trichormus variabilis (strain ATCC 29413 / PCC 7937) (Anabaena variabilis), this protein is Elongation factor Tu.